We begin with the raw amino-acid sequence, 446 residues long: Peptide chain release factor 1, mitochondrial (446 aa).

A mitochondrion-targeting transit peptide spans 1–62; it reads MSHHLCIWLF…LLNKSWSRGC (62 aa). The segment at 298 to 362 is GGQ domain; sequence PKDLRVDTFR…LRARLYQQII (65 aa). The GGQ signature appears at 312–314; sequence GGQ. Gln-314 is subject to N5-methylglutamine.

It belongs to the prokaryotic/mitochondrial release factor family. In terms of processing, methylation of glutamine in the GGQ triplet by HEMK1 is conserved from bacteria to mammals.

It localises to the mitochondrion. Its function is as follows. Mitochondrial peptide chain release factor that directs the termination of translation in response to the peptide chain non-canonical stop codons AGG and AGA. Non-canonical termination codons AGG and AGA are found at the end of MT-CO1/COX1 and MT-ND6/ND6 open reading frames, respectively. Recognizes non-canonical stop codons via a network of interactions between the codon, MTRF1 and the ribosomal RNA (rRNA): in contrast to other translation release factors, which identify the codon in the A-site via direct interactions of amino acid side chains with the bases, MTRF1 repositions the first 2 bases of the stop codon to use an intricate network of interactions that includes residues of the release factor, the rRNA of the small ribosomal subunit, as well as neighboring bases of the mRNA. The chain is Peptide chain release factor 1, mitochondrial from Mus musculus (Mouse).